We begin with the raw amino-acid sequence, 258 residues long: NAD kinase (258 aa).

Asp-45 functions as the Proton acceptor in the catalytic mechanism. NAD(+) is bound by residues 45-46 (DG), 117-118 (NE), Asp-147, Ala-155, 158-163 (TAYNYS), and Ala-182.

Belongs to the NAD kinase family. It depends on a divalent metal cation as a cofactor.

Its subcellular location is the cytoplasm. It carries out the reaction NAD(+) + ATP = ADP + NADP(+) + H(+). Involved in the regulation of the intracellular balance of NAD and NADP, and is a key enzyme in the biosynthesis of NADP. Catalyzes specifically the phosphorylation on 2'-hydroxyl of the adenosine moiety of NAD to yield NADP. This Xanthomonas oryzae pv. oryzae (strain MAFF 311018) protein is NAD kinase.